The chain runs to 193 residues: Thymidine kinase (193 aa).

Residues Gly15 to Thr22 and Asp87 to His90 contribute to the ATP site. Catalysis depends on Glu88, which acts as the Proton acceptor. Cys147, Cys150, Cys185, and Cys188 together coordinate Zn(2+).

Belongs to the thymidine kinase family. Homotetramer.

It is found in the cytoplasm. It carries out the reaction thymidine + ATP = dTMP + ADP + H(+). This Chloroflexus aurantiacus (strain ATCC 29366 / DSM 635 / J-10-fl) protein is Thymidine kinase.